The following is a 261-amino-acid chain: Protein FAM78B (261 aa).

This sequence belongs to the FAM78 family.

This is Protein FAM78B (FAM78B) from Homo sapiens (Human).